The primary structure comprises 345 residues: UDP-3-O-acylglucosamine N-acyltransferase (345 aa).

His-252 acts as the Proton acceptor in catalysis.

Belongs to the transferase hexapeptide repeat family. LpxD subfamily. As to quaternary structure, homotrimer.

The catalysed reaction is a UDP-3-O-[(3R)-3-hydroxyacyl]-alpha-D-glucosamine + a (3R)-hydroxyacyl-[ACP] = a UDP-2-N,3-O-bis[(3R)-3-hydroxyacyl]-alpha-D-glucosamine + holo-[ACP] + H(+). It functions in the pathway bacterial outer membrane biogenesis; LPS lipid A biosynthesis. Catalyzes the N-acylation of UDP-3-O-acylglucosamine using 3-hydroxyacyl-ACP as the acyl donor. Is involved in the biosynthesis of lipid A, a phosphorylated glycolipid that anchors the lipopolysaccharide to the outer membrane of the cell. The polypeptide is UDP-3-O-acylglucosamine N-acyltransferase (Rickettsia rickettsii).